Consider the following 761-residue polypeptide: 1,2-alpha-glucosylglycerol phosphorylase (761 aa).

327–328 lines the glycerol pocket; the sequence is YQ. Residue 333–334 participates in substrate binding; that stretch reads WD. The Proton donor role is filled by E475. 587-588 provides a ligand contact to substrate; it reads KQ.

Belongs to the glycosyl hydrolase 65 family. As to quaternary structure, homodimer.

It carries out the reaction 2-O-(alpha-D-glucopyranosyl)glycerol + phosphate = beta-D-glucose 1-phosphate + glycerol. In terms of biological role, catalyzes both the (1) reversible phosphorolysis of 2-O-alpha-D-glucopyranosyl-sn-glycerol (GG) from beta-D-glucose 1-phosphate (betaGlc1P) and glycerol and (2) the hydrolysis of betaGlc1P. the betaGlc1P hydrolysis is a glucosyl-transfer reaction to an acceptor water molecule that produces an anomer-inverted alpha-glucose, not a phosphatase-type reaction. In the absence of glycerol produces alpha-D-glucopyranose and phosphate from beta-D-glucopyranose 1-phosphate. This chain is 1,2-alpha-glucosylglycerol phosphorylase, found in Bacillus selenitireducens (strain ATCC 700615 / DSM 15326 / MLS10).